The chain runs to 628 residues: Beta-galactosidase large subunit (628 aa).

Glutamate 468 (proton donor) is an active-site residue. Glutamate 536 acts as the Nucleophile in catalysis.

Belongs to the glycosyl hydrolase 2 family. As to quaternary structure, heterodimer of a large (LacL) and a small subunit (LacM).

The enzyme catalyses Hydrolysis of terminal non-reducing beta-D-galactose residues in beta-D-galactosides.. Component of a beta-galactosidase. The polypeptide is Beta-galactosidase large subunit (Lactobacillus helveticus (Lactobacillus suntoryeus)).